Consider the following 121-residue polypeptide: Holo-[acyl-carrier-protein] synthase (121 aa).

Mg(2+) is bound by residues aspartate 8 and glutamate 58.

Belongs to the P-Pant transferase superfamily. AcpS family. It depends on Mg(2+) as a cofactor.

The protein resides in the cytoplasm. The catalysed reaction is apo-[ACP] + CoA = holo-[ACP] + adenosine 3',5'-bisphosphate + H(+). In terms of biological role, transfers the 4'-phosphopantetheine moiety from coenzyme A to a Ser of acyl-carrier-protein. In Bacillus velezensis (strain DSM 23117 / BGSC 10A6 / LMG 26770 / FZB42) (Bacillus amyloliquefaciens subsp. plantarum), this protein is Holo-[acyl-carrier-protein] synthase.